Consider the following 400-residue polypeptide: DNA polymerase IV (400 aa).

The region spanning 5-187 (IFLVDMNAFF…LPVEFMNGIG (183 aa)) is the UmuC domain. Residues Asp-9 and Asp-105 each coordinate Mg(2+). Glu-106 is an active-site residue.

Belongs to the DNA polymerase type-Y family. In terms of assembly, monomer. Requires Mg(2+) as cofactor.

It is found in the cytoplasm. The enzyme catalyses DNA(n) + a 2'-deoxyribonucleoside 5'-triphosphate = DNA(n+1) + diphosphate. Poorly processive, error-prone DNA polymerase involved in untargeted mutagenesis. Copies undamaged DNA at stalled replication forks, which arise in vivo from mismatched or misaligned primer ends. These misaligned primers can be extended by PolIV. Exhibits no 3'-5' exonuclease (proofreading) activity. May be involved in translesional synthesis, in conjunction with the beta clamp from PolIII. The protein is DNA polymerase IV of Clostridium kluyveri (strain ATCC 8527 / DSM 555 / NBRC 12016 / NCIMB 10680 / K1).